A 156-amino-acid polypeptide reads, in one-letter code: Protein UXT (156 aa).

This sequence belongs to the UXT family. In terms of assembly, homohexamer. Component of the PAQosome complex which is responsible for the biogenesis of several protein complexes and which consists of R2TP complex members RUVBL1, RUVBL2, RPAP3 and PIH1D1, URI complex members PFDN2, PFDN6, PDRG1, UXT and URI1 as well as ASDURF, POLR2E and DNAAF10/WDR92. Interacts with LRPPRC. Interacts with androgen receptor AR (via N-terminus). Interacts with estrogen receptor ESR1; the interaction relocalizes ESR1 to the cytoplasm. In the nucleus, interacts specifically with RELA (via RHD domain) and forms a dynamic complex with NF-kappa-B and is recruited to the NF-kappa-B enhanceosome upon stimulation. Interacts with MECOM. Interacts with URI1.

The protein resides in the cytoplasm. It localises to the nucleus. It is found in the cytoskeleton. Its subcellular location is the microtubule organizing center. The protein localises to the centrosome. The protein resides in the spindle pole. Involved in gene transcription regulation. Acts in concert with the corepressor URI1 to regulate androgen receptor AR-mediated transcription. Together with URI1, associates with chromatin to the NKX3-1 promoter region. Negatively regulates the transcriptional activity of the estrogen receptor ESR1 by inducing its translocation into the cytoplasm. May act as nuclear chaperone that facilitates the formation of the NF-kappa-B enhanceosome and thus positively regulates NF-kappa-B transcription activity. Potential component of mitochondrial-associated LRPPRC, a multidomain organizer that potentially integrates mitochondria and the microtubular cytoskeleton with chromosome remodeling. Increasing concentrations of UXT contributes to progressive aggregation of mitochondria and cell death potentially through its association with LRPPRC. Suppresses cell transformation and it might mediate this function by interaction and inhibition of the biological activity of cell proliferation and survival stimulatory factors like MECOM. In Bos taurus (Bovine), this protein is Protein UXT (UXT).